A 99-amino-acid chain; its full sequence is Aspartyl/glutamyl-tRNA(Asn/Gln) amidotransferase subunit C (99 aa).

The protein belongs to the GatC family. In terms of assembly, heterotrimer of A, B and C subunits.

It carries out the reaction L-glutamyl-tRNA(Gln) + L-glutamine + ATP + H2O = L-glutaminyl-tRNA(Gln) + L-glutamate + ADP + phosphate + H(+). The catalysed reaction is L-aspartyl-tRNA(Asn) + L-glutamine + ATP + H2O = L-asparaginyl-tRNA(Asn) + L-glutamate + ADP + phosphate + 2 H(+). In terms of biological role, allows the formation of correctly charged Asn-tRNA(Asn) or Gln-tRNA(Gln) through the transamidation of misacylated Asp-tRNA(Asn) or Glu-tRNA(Gln) in organisms which lack either or both of asparaginyl-tRNA or glutaminyl-tRNA synthetases. The reaction takes place in the presence of glutamine and ATP through an activated phospho-Asp-tRNA(Asn) or phospho-Glu-tRNA(Gln). In Leptothrix cholodnii (strain ATCC 51168 / LMG 8142 / SP-6) (Leptothrix discophora (strain SP-6)), this protein is Aspartyl/glutamyl-tRNA(Asn/Gln) amidotransferase subunit C.